We begin with the raw amino-acid sequence, 196 residues long: Holliday junction branch migration complex subunit RuvA (196 aa).

Residues 1–65 are domain I; that stretch reads MIGYLRGKII…EDALQLFGFH (65 aa). The domain II stretch occupies residues 66 to 140; sequence DKEEKNLFLS…GKLVSIEEGG (75 aa). The tract at residues 140-144 is flexible linker; it reads GVVAK. The tract at residues 145–196 is domain III; the sequence is AKSVAHTQITSALLNLGYKSQLVDQFVSSLPADIAVEDGIRKGFQTLSGGLS.

The protein belongs to the RuvA family. Homotetramer. Forms an RuvA(8)-RuvB(12)-Holliday junction (HJ) complex. HJ DNA is sandwiched between 2 RuvA tetramers; dsDNA enters through RuvA and exits via RuvB. An RuvB hexamer assembles on each DNA strand where it exits the tetramer. Each RuvB hexamer is contacted by two RuvA subunits (via domain III) on 2 adjacent RuvB subunits; this complex drives branch migration. In the full resolvosome a probable DNA-RuvA(4)-RuvB(12)-RuvC(2) complex forms which resolves the HJ.

Its subcellular location is the cytoplasm. Functionally, the RuvA-RuvB-RuvC complex processes Holliday junction (HJ) DNA during genetic recombination and DNA repair, while the RuvA-RuvB complex plays an important role in the rescue of blocked DNA replication forks via replication fork reversal (RFR). RuvA specifically binds to HJ cruciform DNA, conferring on it an open structure. The RuvB hexamer acts as an ATP-dependent pump, pulling dsDNA into and through the RuvAB complex. HJ branch migration allows RuvC to scan DNA until it finds its consensus sequence, where it cleaves and resolves the cruciform DNA. This chain is Holliday junction branch migration complex subunit RuvA, found in Bdellovibrio bacteriovorus (strain ATCC 15356 / DSM 50701 / NCIMB 9529 / HD100).